Consider the following 178-residue polypeptide: uncharacterized protein (178 aa).

Residues 152 to 178 (KKLKGAEPKEHQAPNFEPPTEIFPESN) are disordered.

This sequence belongs to the EUO family.

This is an uncharacterized protein from Chlamydia pneumoniae (Chlamydophila pneumoniae).